The chain runs to 585 residues: Aspartate--tRNA ligase (585 aa).

Glu-173 contacts L-aspartate. Positions 197 to 200 are aspartate; sequence QTLK. Residue Arg-219 participates in L-aspartate binding. ATP-binding positions include 219–221 and Gln-228; that span reads RDE. Position 446 (His-446) interacts with L-aspartate. ATP is bound at residue Glu-480. An L-aspartate-binding site is contributed by Arg-487. 532–535 provides a ligand contact to ATP; that stretch reads GLDR.

This sequence belongs to the class-II aminoacyl-tRNA synthetase family. Type 1 subfamily. As to quaternary structure, homodimer.

The protein resides in the cytoplasm. The enzyme catalyses tRNA(Asp) + L-aspartate + ATP = L-aspartyl-tRNA(Asp) + AMP + diphosphate. Functionally, catalyzes the attachment of L-aspartate to tRNA(Asp) in a two-step reaction: L-aspartate is first activated by ATP to form Asp-AMP and then transferred to the acceptor end of tRNA(Asp). The sequence is that of Aspartate--tRNA ligase from Bacteroides fragilis (strain YCH46).